The sequence spans 734 residues: Tripartite terminase subunit 3 (734 aa).

The Nuclear localization signal motif lies at 183 to 189; sequence PKKRAKV. The Walker A motif motif lies at 258–265; that stretch reads VPRRHGKT. A Walker B motif motif is present at residues 352 to 357; that stretch reads LLFVDE. Catalysis depends on E357, which acts as the For ATPase activity. Catalysis depends on for nuclease activity residues D509, E581, and D706.

The protein belongs to the herpesviridae TRM3 protein family. In terms of assembly, interacts with the terminase subunits TRM1 and TRM2. Interacts with portal protein.

The protein resides in the host nucleus. Component of the molecular motor that translocates viral genomic DNA in empty capsid during DNA packaging. Forms a tripartite terminase complex together with TRM1 and TRM2 in the host cytoplasm. Once the complex reaches the host nucleus, it interacts with the capsid portal vertex. This portal forms a ring in which genomic DNA is translocated into the capsid. TRM3 carries an RNase H-like nuclease activity that plays an important role for the cleavage of concatemeric viral DNA into unit length genomes. The protein is Tripartite terminase subunit 3 of Human herpesvirus 2 (strain HG52) (HHV-2).